Consider the following 782-residue polypeptide: Coiled-coil alpha-helical rod protein 1 (782 aa).

2 stretches are compositionally biased toward basic and acidic residues: residues 62 to 74 (ERDVSSDRQEPGR) and 208 to 218 (ETRRAGEAKEL). 2 disordered regions span residues 62-82 (ERDVSSDRQEPGRRGRSWGLE) and 185-218 (AHKEALSSLTSKAEGLEKSLSSLETRRAGEAKEL). Coiled-coil stretches lie at residues 82–314 (EGSQ…ELTR), 344–398 (LMVQ…EVER), and 498–691 (VTDV…QQEG).

It is found in the cytoplasm. It localises to the nucleus. In terms of biological role, may be a regulator of keratinocyte proliferation or differentiation. The protein is Coiled-coil alpha-helical rod protein 1 (CCHCR1) of Gorilla gorilla gorilla (Western lowland gorilla).